The chain runs to 666 residues: Endogenous retrovirus group K member 19 Gag polyprotein (666 aa).

Gly-2 is lipidated: N-myristoyl glycine. Disordered regions lie at residues 170–189 (LVGPSESKPRGTSRLPAGQV) and 223–264 (PLES…GSEL). Residues 232 to 247 (GMPPAPQGRAPYPQPP) are compositionally biased toward pro residues. CCHC-type zinc fingers lie at residues 544–561 (GKCYNCGQIGHLKKNCPV) and 580–597 (DLCPRCKKGKHWASQCRS). A disordered region spans residues 598–640 (KFDKNGQPLSGNEQRGQPQAPQQTGAFPIQPFVPHGFQGQQPP). The span at 604–622 (QPLSGNEQRGQPQAPQQTG) shows a compositional bias: polar residues.

It belongs to the beta type-B retroviral Gag protein family. HERV class-II K(HML-2) gag subfamily. Post-translationally, myristoylation is essential for retroviral assembly. Alteration of the glycine residue leads to a block in the budding of particles and an accumulation of Gag inside the cell. Specific enzymatic cleavages may yield mature proteins.

Its subcellular location is the cell membrane. Its function is as follows. The products of the Gag polyproteins of infectious retroviruses perform highly complex orchestrated tasks during the assembly, budding, maturation, and infection stages of the viral replication cycle. During viral assembly, the proteins form membrane associations and self-associations that ultimately result in budding of an immature virion from the infected cell. Gag precursors also function during viral assembly to selectively bind and package two plus strands of genomic RNA. Endogenous Gag proteins may have kept, lost or modified their original function during evolution. This Homo sapiens (Human) protein is Endogenous retrovirus group K member 19 Gag polyprotein (ERVK-19).